A 116-amino-acid polypeptide reads, in one-letter code: MNVTNAMPNPLIFTDIAAGKVKELIEEEGNDKLMLRVFITGGGCSGFQYGFTFDETSHEGDTRVKNGGVTLLIDPTSYQYLVGAEIDYTEGLEGAQFVIRNPNAETTCGCGSSFSP.

Iron-sulfur cluster-binding residues include cysteine 44, cysteine 108, and cysteine 110.

Belongs to the HesB/IscA family. In terms of assembly, homodimer. It depends on iron-sulfur cluster as a cofactor.

In terms of biological role, required for insertion of 4Fe-4S clusters for at least IspG. This chain is Iron-sulfur cluster insertion protein ErpA, found in Nitrosococcus oceani (strain ATCC 19707 / BCRC 17464 / JCM 30415 / NCIMB 11848 / C-107).